Here is a 75-residue protein sequence, read N- to C-terminus: MAYRESFYRFLMTQRNPDSLDDIAEFANNAQHDSSFPKQEEDYEKLSEYLELNAGYLPSMSVFDKAYQLYLDNMN.

Belongs to the UPF0346 family.

The sequence is that of UPF0346 protein LJ_1103 from Lactobacillus johnsonii (strain CNCM I-12250 / La1 / NCC 533).